A 56-amino-acid chain; its full sequence is MQTNRVILLAVMICLVSAITVFLLNGCKVDFLDIGGTIIGCFLGIFVVVRIQKKQS.

A run of 2 helical transmembrane segments spans residues 6–26 and 29–49; these read VILL…LLNG and VDFL…FVVV.

Its subcellular location is the cell membrane. This is an uncharacterized protein from Bacillus subtilis (strain 168).